Reading from the N-terminus, the 351-residue chain is MGTMAGSWAALLGHLVAGNDLSAEDTAWAMDLVMTGEATPARVAAFVVALRAKGETPAEVRGMADAMLSHSRPLEIRRRAVDIVGTGGDRSGSVNISTMASIVVAAAGVPVVKHGNRAASSKCGTADVLEALGVAIDLPPEGVRRCVEDLGIGFCFAPVFHPAMRHAAGPRREIGIPTAFNVLGPLTNPARPSAGLIGCGDQRMAPVMAEVFAARGGSVLLVRGDDGMDEITTTTTTTVWVVQGGTVTEESIDPAEFGIGYSTPAELQGGDAEVNAEVVRRLVAGEAGPVRDAVLLNAAGALAAFEGPGTDLRGRLGADVERVAAAIDSGAAADLLDRWAKRSTEIMRESE.

5-phospho-alpha-D-ribose 1-diphosphate contacts are provided by residues Gly85, 88–89 (GD), Ser93, 95–98 (NIST), 113–121 (KHGNRAASS), and Thr125. An anthranilate-binding site is contributed by Gly85. Ser97 lines the Mg(2+) pocket. Residue Asn116 coordinates anthranilate. Residue Arg171 participates in anthranilate binding. Mg(2+)-binding residues include Asp229 and Glu230.

Belongs to the anthranilate phosphoribosyltransferase family. As to quaternary structure, homodimer. Requires Mg(2+) as cofactor.

The enzyme catalyses N-(5-phospho-beta-D-ribosyl)anthranilate + diphosphate = 5-phospho-alpha-D-ribose 1-diphosphate + anthranilate. The protein operates within amino-acid biosynthesis; L-tryptophan biosynthesis; L-tryptophan from chorismate: step 2/5. In terms of biological role, catalyzes the transfer of the phosphoribosyl group of 5-phosphorylribose-1-pyrophosphate (PRPP) to anthranilate to yield N-(5'-phosphoribosyl)-anthranilate (PRA). This chain is Anthranilate phosphoribosyltransferase, found in Saccharopolyspora erythraea (strain ATCC 11635 / DSM 40517 / JCM 4748 / NBRC 13426 / NCIMB 8594 / NRRL 2338).